Reading from the N-terminus, the 62-residue chain is Large ribosomal subunit protein bL28 (62 aa).

Belongs to the bacterial ribosomal protein bL28 family.

In Helicobacter hepaticus (strain ATCC 51449 / 3B1), this protein is Large ribosomal subunit protein bL28.